Reading from the N-terminus, the 30-residue chain is GLKDMIKNLAKEAAVKLAGAVINRFSPQPQ.

Expressed by the skin glands.

The protein localises to the secreted. Its function is as follows. Probably has antibacterial activity. This is Nattererin-2 from Physalaemus nattereri (Cuyaba dwarf frog).